Consider the following 371-residue polypeptide: Protein arginine N-methyltransferase 1 (371 aa).

The region spanning 50–361 is the SAM-dependent MTase PRMT-type domain; it reads KDYYFDSYAH…DLDFKGQLCE (312 aa). S-adenosyl-L-methionine is bound by residues His-63, Arg-72, Gly-96, and Glu-118. Arg-72 contributes to the S-adenosyl-L-homocysteine binding site. S-adenosyl-L-homocysteine is bound at residue Glu-118. At Lys-134 the chain carries N6-succinyllysine. A Glycyl lysine isopeptide (Lys-Gly) (interchain with G-Cter in ubiquitin) cross-link involves residue Lys-145. Residues Val-146 and Glu-147 each coordinate S-adenosyl-L-homocysteine. Glu-147 is an S-adenosyl-L-methionine binding site. Residues Glu-162 and Glu-171 contribute to the active site. 2 positions are modified to N6-acetyllysine: Lys-228 and Lys-233. Residues Ser-304 and Ser-307 each carry the phosphoserine modification.

It belongs to the class I-like SAM-binding methyltransferase superfamily. Protein arginine N-methyltransferase family. As to quaternary structure, homodimer. Homooctamer; individual homodimers associates to form a homooctamer. Individual homodimers can associate to form a homohexamer. Heterodimer with PRMT8. Interacts with BTG1, BTG2, NFATC2IP and IFNAR1. Interacts with and methylates CHTOP, thereby enabling the interaction of CHTOP with the 5FMC complex. Interacts with ILF3 and SUPT5H. Interacts with and methylates FOXO1, leading to the nuclear retention of FOXO1 and the stimulation of FOXO1 transcriptional activity. Methylation of FOXO1 is increased upon oxidative stress. Interacts with and probably methylates ATXN2L. Component of the methylosome, a 20S complex containing at least CLNS1A/pICln, PRMT5/SKB1, WDR77/MEP50, PRMT1 and ERH. Interacts with DHX9 (via RGG region). Interacts (via N-terminus) with HABP4. Interacts with MAP3K5/ASK1; the interaction results in MAP3K5 methylation by PRMT1 which inhibits MAP3K5 activation. Interacts with TRIM48; the interaction results in ubiquitination of PRMT1 by TRIM48, leading to PRMT1 proteasomal degradation and activation of MAP3K5. Interacts with GATOR1 complex; this interaction is S-adenosyl-L-methionine (SAM) dependent and is perturbated by SAMTOR in a SAM-sensitive manner. Interacts with GFI1; promoting recognition and binding of MRE11 and TP53BP1 substrates by PRMT1. Post-translationally, polyubiquitinated at Lys-145 by the SCF(FBXL17) complex, leading to its subsequent degradation. Ubiquitination is regulated by acetylation at Lys-228 and Lys-233. Polyubiquitinated by E3 ubiquitin-protein ligase TRIM48, leading to suppression of MAP3K5/ASK1 methylation and subsequent MAP3K5 activation. Acetylation at Lys-228 and Lys-233 regulates ubiquitination by the SCF(FBXL17) complex. Acetylated at Lys-233 by p300/EP300. Deacetylated at Lys-228 and Lys-233 by SIRT1. As to expression, widely expressed. Expressed strongly in colorectal cancer cells (at protein level). Expressed strongly in colorectal cancer tissues compared to wild-type colon samples (at protein level). Expressed strongly in colorectal cancer tissues compared to wild-type colon samples.

The protein localises to the nucleus. It localises to the nucleoplasm. Its subcellular location is the cytoplasm. It is found in the cytosol. The protein resides in the lysosome membrane. The catalysed reaction is L-arginyl-[protein] + 2 S-adenosyl-L-methionine = N(omega),N(omega)-dimethyl-L-arginyl-[protein] + 2 S-adenosyl-L-homocysteine + 2 H(+). The enzyme catalyses L-arginyl-[protein] + S-adenosyl-L-methionine = N(omega)-methyl-L-arginyl-[protein] + S-adenosyl-L-homocysteine + H(+). It carries out the reaction N(omega)-methyl-L-arginyl-[protein] + S-adenosyl-L-methionine = N(omega),N(omega)-dimethyl-L-arginyl-[protein] + S-adenosyl-L-homocysteine + H(+). In terms of biological role, arginine methyltransferase that methylates (mono and asymmetric dimethylation) the guanidino nitrogens of arginyl residues present in proteins such as ESR1, histone H2, H3 and H4, FMR1, ILF3, HNRNPA1, HNRNPD, NFATC2IP, SUPT5H, TAF15, EWS, HABP4, SERBP1, RBM15, FOXO1, CHTOP, MAP3K5/ASK1, MICU1 and NPRL2. Constitutes the main enzyme that mediates monomethylation and asymmetric dimethylation of histone H4 'Arg-3' (H4R3me1 and H4R3me2a, respectively), a specific tag for epigenetic transcriptional activation. May be involved in the regulation of TAF15 transcriptional activity, act as an activator of estrogen receptor (ER)-mediated transactivation, play a key role in neurite outgrowth and act as a negative regulator of megakaryocytic differentiation, by modulating p38 MAPK pathway. Methylates RBM15, promoting ubiquitination and degradation of RBM15. Methylates MRE11 and TP53BP1, promoting the DNA damage response. Methylates FOXO1 and retains it in the nucleus increasing its transcriptional activity. Methylates CHTOP and this methylation is critical for its 5-hydroxymethylcytosine (5hmC)-binding activity. Methylates MAP3K5/ASK1 at 'Arg-78' and 'Arg-80' which promotes association of MAP3K5 with thioredoxin and negatively regulates MAP3K5 association with TRAF2, inhibiting MAP3K5 stimulation and MAP3K5-induced activation of JNK. Methylates H4R3 in genes involved in glioblastomagenesis in a CHTOP- and/or TET1-dependent manner. Plays a role in regulating alternative splicing in the heart. Methylates NPRL2 at 'Arg-78' leading to inhibition of its GTPase activator activity and then the GATOR1 complex and consequently inducing timely mTORC1 activation under methionine-sufficient conditions. This is Protein arginine N-methyltransferase 1 from Homo sapiens (Human).